The chain runs to 347 residues: Dual specificity mitogen-activated protein kinase kinase 3 (347 aa).

Methionine 1 is subject to N-acetylmethionine. The segment covering 1–11 (MESPAASPPAS) has biased composition (pro residues). The segment at 1 to 45 (MESPAASPPASLPQTKGKSKRKKDLRISCVSKPPVSNPTPPRNLD) is disordered. Serine 3 is modified (phosphoserine). Residues 64–325 (LVTISELGRG…YLELMEHPFF (262 aa)) enclose the Protein kinase domain. Residues 70-78 (LGRGAYGVV) and lysine 93 each bind ATP. The active-site Proton acceptor is the aspartate 190. Serine 218 carries the phosphoserine modification. Threonine 222 carries the phosphothreonine modification.

Belongs to the protein kinase superfamily. STE Ser/Thr protein kinase family. MAP kinase kinase subfamily. Component of a signaling complex containing at least AKAP13, PKN1, MAPK14, ZAK and MAP2K3. Within this complex, AKAP13 interacts directly with PKN1, which in turn recruits MAPK14, MAP2K3 and ZAK. Binds to DYRK1B/MIRK and increases its kinase activity. Part of a complex with MAP3K3, RAC1 and CCM2. Interacts with ARRB1. Autophosphorylated. Phosphorylation on Ser-218 and Thr-222 by MAP kinase kinase kinases positively regulates the kinase activity. Phosphorylated by TAOK2.

It carries out the reaction L-seryl-[protein] + ATP = O-phospho-L-seryl-[protein] + ADP + H(+). The catalysed reaction is L-threonyl-[protein] + ATP = O-phospho-L-threonyl-[protein] + ADP + H(+). It catalyses the reaction L-tyrosyl-[protein] + ATP = O-phospho-L-tyrosyl-[protein] + ADP + H(+). With respect to regulation, activated by dual phosphorylation on Ser-218 and Thr-222. Its function is as follows. Dual specificity kinase. Is activated by cytokines and environmental stress in vivo. Catalyzes the concomitant phosphorylation of a threonine and a tyrosine residue in the MAP kinase p38. Part of a signaling cascade that begins with the activation of the adrenergic receptor ADRA1B and leads to the activation of MAPK14. The chain is Dual specificity mitogen-activated protein kinase kinase 3 (Map2k3) from Mus musculus (Mouse).